Here is a 249-residue protein sequence, read N- to C-terminus: Receptor-transporting protein 4 (249 aa).

Topologically, residues 1-227 are cytoplasmic; sequence MLFPDDFSTW…QGCREPPQRE (227 aa). A 3CxxC-type zinc finger spans residues 50–162; the sequence is TVLGRFQCSR…DTRNCEACSL (113 aa). Positions 173–208 are disordered; the sequence is KVKPPRSPSPLPKSSSPSKSCPPPPQTRNTDFGNKT. Positions 199–208 are enriched in polar residues; that stretch reads TRNTDFGNKT. The helical transmembrane segment at 228-248 threads the bilayer; the sequence is IEPPLFLFLSIAAFALFSLFT.

Belongs to the TMEM7 family. As to quaternary structure, interacts with TASR16. Interacts with OPRD1 and OPRM1; the interaction promotes cell surface localization of the OPDR1-OPRM1 heterodimer. In terms of tissue distribution, expressed at low levels in olfactory neurons. Upon viral infection, highly expressed in brain and different cells of nervous tissue.

It localises to the membrane. Its subcellular location is the cytoplasm. Functionally, chaperone protein that facilitates the trafficking and functional cell surface expression of some G-protein coupled receptors (GPCRs). Promotes functional expression of the bitter taste receptor TAS2R16. Also promotes functional expression of the opioid receptor heterodimer OPRD1-OPRM1. In addition, acts as a potent IFN-inducible suppressor of pathogens including lyssavirus rabies, influenza A or yellow fever virus. Mechanistically, associates with the viral replicase, binds viral RNA, and thereby suppresses viral genome amplification that replicates at the endoplasmic reticulum. In addition, restores antiviral signaling by interacting with and sequestering influenza virus protein NS1. This chain is Receptor-transporting protein 4 (Rtp4), found in Mus musculus (Mouse).